Here is a 448-residue protein sequence, read N- to C-terminus: Chromosomal replication initiator protein DnaA (448 aa).

The domain I, interacts with DnaA modulators stretch occupies residues 1–85 (MHDNLPQIWE…EVHIVVPSEE (85 aa)). The tract at residues 85–110 (ERVGDTQNINARRSNAQSPIMGNSPL) is domain II. The interval 111 to 327 (ILNPKYTFDT…GALIRIVAYS (217 aa)) is domain III, AAA+ region. 4 residues coordinate ATP: Gly-155, Gly-157, Lys-158, and Thr-159. The tract at residues 328 to 448 (SLTNSEVTVE…DAIIKELKSD (121 aa)) is domain IV, binds dsDNA.

The protein belongs to the DnaA family. Oligomerizes as a right-handed, spiral filament on DNA at oriC.

The protein resides in the cytoplasm. Functionally, plays an essential role in the initiation and regulation of chromosomal replication. ATP-DnaA binds to the origin of replication (oriC) to initiate formation of the DNA replication initiation complex once per cell cycle. Binds the DnaA box (a 9 base pair repeat at the origin) and separates the double-stranded (ds)DNA. Forms a right-handed helical filament on oriC DNA; dsDNA binds to the exterior of the filament while single-stranded (ss)DNA is stabiized in the filament's interior. The ATP-DnaA-oriC complex binds and stabilizes one strand of the AT-rich DNA unwinding element (DUE), permitting loading of DNA polymerase. After initiation quickly degrades to an ADP-DnaA complex that is not apt for DNA replication. Binds acidic phospholipids. The protein is Chromosomal replication initiator protein DnaA of Alkaliphilus metalliredigens (strain QYMF).